Consider the following 1678-residue polypeptide: MNSSKNPPSTLLDVFLDTARNLDTALRNVLECGEHRWSYRELDTVSSALAQHLRYTVGLSPTVAVISENHPYILALMLAVWKLGGTFAPIDVHSPAELVAGMLNIVSPSCLVIPSSDVTNQTLACDLNIPVVAFHPHQSTIPELNKKYLTDSQISPDLPFSDPNRPALYLFTSSATSRSNLKCVPLTHTFILRNSLSKRAWCKRMRPETDFDGIRVLGWAPWSHVLAHMQDIGPLTLLNAGCYVFATTPSTYPTELKDDRDLISCAANAIMYKGVKSFACLPFVLGGLKALCESEPSVKAHLQVEERAQLLKSLQHMEILECGGAMLEASVASWAIENCIPISIGIGMTETGGALFAGPVQAIKTGFSSEDKFIEDATYLLVKDDHESHAEEDINEGELVVKSKMLPRGYLGYSDPSFSVDDAGWVTFRTGDRYSVTPDGKFSWLGRNTDFIQMTSGETLDPRPIESSLCESSLISRACVIGDKFLNGPAAAVCAIIELEPTAVEKGQAHSREIARVFAPINRDLPPPLRIAWSHVLVLQPSEKIPMTKKGTIFRKKIEQVFGSALGGSSGDNSQATADAGVVRRDELSNTVKHIISRVLGVSDDELLWTLSFAELGMTSALATRIANELNEVLVGVNLPINACYIHVDLPSLSNAVYAKLAHLKLPDRTPEPRQAPVENSGGKEIVVVGQAFRLPGSINDVASLRDAFLARQASSIITEIPSDRWDHASFYPKDIRFNKAGLVDIANYDHSFFGLTATEALYLSPTMRLALEVSFEALENANIPVSQLKGSQTAVYVATTDDGFETLLNAEAGYDAYTRFYGTGRAASTASGRISCLLDVHGPSITVDTACSGGAVCIDQAIDYLQSSSAADTAIICASNTHCWPGSFRFLSAQGMVSPGGRCATFTTDADGYVPSEGAVAFILKTREAAMRDKDTILATIKATQISHNGRSQGLVAPNVNSQADLHRSLLQKAGLSPADIRFIEAHGTGTSLGDLSEIQAINDAYTSSQPRTTGPLIVSASKTVIGHTEPAGPLVGMLSVLNSFKEGAVPGLAHLTADNLNPSLDCSSVPLLIPYQPVHLAAPKPHRAAVRSYGFSGTLGGIVLEAPDEERLEEELPNDKPMLFVVSAKTHTALIEYLGRYLEFLLQANPQDFCDICYTSCVGREHYRYRYACVANDMEDLIGQLQKRLGSKVPPKPSYKRGALAFAFSGQGTQFRGMATELAKAYSGFRKIVSDLAKRASELSGHAIDRFLLAYDIGAENVAPDSEADQICIFVYQCSVLRWLQTMGIRPSAVIGHSLGEISASVAAGALSLDSALDLVISRARLLRSSASAPAGMAAMSASQDEVVELIGKLDLDKANSLSVSVINGPQNTVVSGSSAAIESIVALAKGRKIKASALNINQAFHSPYVDSAVPGLRAWSEKHISSARPLQIPLYSTLLGAQISEGEMLNPDHWVDHARKPVQFAQAATTMKESFTGVIIDIGPQVVAWSLLLSNGLTSVTALAAKRGRSQQVAFLSALADLYQDYGVVPDFVGLYAQQEDASRLKKTDILTYPFQRGEETLSSGSSTPTLENTDLDSGKELLMGPTRGLLRADDLRDSIVSSVKDVLELKSNEDLDLSESLNALGMDSIMFAQLRKRIGEGLGLNVPMVFLSDAFSIGEMVSNLVEQAEASEDN.

Residues 33–453 are adenylation (A) domain; it reads GEHRWSYREL…WLGRNTDFIQ (421 aa). The 76-residue stretch at 586–661 folds into the Carrier 1 domain; it reads DELSNTVKHI…SLSNAVYAKL (76 aa). Residue Ser-620 is modified to O-(pantetheine 4'-phosphoryl)serine. The Ketosynthase family 3 (KS3) domain maps to 683–1108; sequence GKEIVVVGQA…GTLGGIVLEA (426 aa). Residues Cys-852, His-988, and His-1029 each act as for beta-ketoacyl synthase activity in the active site. A malonyl-CoA:ACP transacylase (MAT) domain region spans residues 1201–1499; the sequence is YKRGALAFAF…VAWSLLLSNG (299 aa). The interval 1562–1582 is disordered; the sequence is EETLSSGSSTPTLENTDLDSG. Over residues 1564–1576 the composition is skewed to polar residues; it reads TLSSGSSTPTLEN. The region spanning 1597 to 1672 is the Carrier 2 domain; it reads DDLRDSIVSS…EMVSNLVEQA (76 aa). An O-(pantetheine 4'-phosphoryl)serine modification is found at Ser-1632.

It in the N-terminal section; belongs to the NRP synthetase family.

It carries out the reaction (E)-caffeate + 2 malonyl-CoA + ATP + H(+) = hispidin + AMP + 2 CO2 + diphosphate + 2 CoA. The protein operates within secondary metabolite biosynthesis. In terms of biological role, PKS-NRPS hybrid synthetase; part of the gene cluster that mediates the fungal bioluminescence cycle. Performs the biosynthesis of hispidin from caffeic acid by two cycles of addition of malonyl units followed by lactonization. The fungal bioluminescence cycle begins with the hispidin synthetase that catalyzes the formation of hispidin which is further hydroxylated by the hispidin-3-hydroxylase, yielding the fungal luciferin 3-hydroxyhispidin. The luciferase then produces an endoperoxide as a high-energy intermediate with decomposition that yields oxyluciferin (also known as caffeoylpyruvate) and light emission. Oxyluciferin can be recycled to caffeic acid by caffeoylpyruvate hydrolase. This Neonothopanus nambi (Agaricus nambi) protein is Hispidin synthase.